Reading from the N-terminus, the 283-residue chain is Bifunctional protein FolD (283 aa).

NADP(+)-binding positions include 164 to 166, S189, and I230; that span reads GRS.

Belongs to the tetrahydrofolate dehydrogenase/cyclohydrolase family. In terms of assembly, homodimer.

The enzyme catalyses (6R)-5,10-methylene-5,6,7,8-tetrahydrofolate + NADP(+) = (6R)-5,10-methenyltetrahydrofolate + NADPH. It catalyses the reaction (6R)-5,10-methenyltetrahydrofolate + H2O = (6R)-10-formyltetrahydrofolate + H(+). It functions in the pathway one-carbon metabolism; tetrahydrofolate interconversion. Its function is as follows. Catalyzes the oxidation of 5,10-methylenetetrahydrofolate to 5,10-methenyltetrahydrofolate and then the hydrolysis of 5,10-methenyltetrahydrofolate to 10-formyltetrahydrofolate. The polypeptide is Bifunctional protein FolD (Lacticaseibacillus casei (strain BL23) (Lactobacillus casei)).